Consider the following 158-residue polypeptide: C-type lectin lectoxin-Enh7 (158 aa).

An N-terminal signal peptide occupies residues 1 to 23 (MGQFTVVSLGLLAVFLSLSGAKG). Disulfide bonds link C26–C37, C54–C154, and C129–C146. In terms of domain architecture, C-type lectin spans 33 to 155 (RNGVCNKLFP…CASLHPFICQ (123 aa)). Positions 119-121 (EPN) match the Mannose-binding motif. Ca(2+)-binding residues include E127, N142, and D143.

Belongs to the true venom lectin family. As to expression, expressed by the venom gland.

It localises to the secreted. Functionally, mannose-binding lectin which recognizes specific carbohydrate structures and agglutinates a variety of animal cells by binding to cell-surface glycoproteins and glycolipids. May be a calcium-dependent lectin. This Pseudoferania polylepis (Macleay's water snake) protein is C-type lectin lectoxin-Enh7.